The primary structure comprises 322 residues: MVLDMASHLYTNPPQNLHFISSSSSLKPHLCLSFKRINPKHKSSSSSVFVPYASQSSIAITSKERWSLNGMSALVTGGTRGIGRAIVEELAGLGAEVHTCARNEYELENCLSDWNRSGFRVAGSVCDVSDRSQREALMETVSSVFEGKLHILVNNVGTNIRKPMVEFTAGEFSTLMSTNFESVFHLCQLAYPLLRESKAGSVVFISSVSGFVSLKNMSVQSSTKGAINQLTRSLACEWAKDNIRINAVAPWYIKTSMVEQVLSNKEYLEEVYSVTPLGRLGEPREVSSAVAFLCLPASSYITGQILCVDGGMSINGFFPRHD.

Residues 1–61 (MVLDMASHLY…YASQSSIAIT (61 aa)) constitute a chloroplast transit peptide. 74 to 98 (LVTGGTRGIGRAIVEELAGLGAEVH) contributes to the NADP(+) binding site. Substrate is bound at residue S207.

Belongs to the short-chain dehydrogenases/reductases (SDR) family. SDR65C subfamily.

The protein localises to the plastid. The protein resides in the chloroplast. In Arabidopsis thaliana (Mouse-ear cress), this protein is Tropinone reductase homolog At2g29260, chloroplastic.